Reading from the N-terminus, the 692-residue chain is Elongation factor G (692 aa).

In terms of domain architecture, tr-type G spans 8–283 (NRIRNIGIAA…AVIDYLPAPT (276 aa)). Residues 17-24 (AHIDAGKT), 81-85 (DTPGH), and 135-138 (NKMD) contribute to the GTP site.

Belongs to the TRAFAC class translation factor GTPase superfamily. Classic translation factor GTPase family. EF-G/EF-2 subfamily.

It localises to the cytoplasm. Functionally, catalyzes the GTP-dependent ribosomal translocation step during translation elongation. During this step, the ribosome changes from the pre-translocational (PRE) to the post-translocational (POST) state as the newly formed A-site-bound peptidyl-tRNA and P-site-bound deacylated tRNA move to the P and E sites, respectively. Catalyzes the coordinated movement of the two tRNA molecules, the mRNA and conformational changes in the ribosome. This is Elongation factor G from Helicobacter pylori (strain G27).